The chain runs to 639 residues: Chaperone protein DnaK (639 aa).

Phosphothreonine; by autocatalysis is present on Thr-197. The tract at residues 600–639 is disordered; the sequence is SGAQGGAQAGPDMNAGQSNAGQNNGKQDDNVQDADFEEVK. The span at 613 to 624 shows a compositional bias: low complexity; the sequence is NAGQSNAGQNNG. Over residues 629–639 the composition is skewed to acidic residues; that stretch reads NVQDADFEEVK.

It belongs to the heat shock protein 70 family.

Its function is as follows. Acts as a chaperone. The polypeptide is Chaperone protein DnaK (Bacteroides fragilis (strain ATCC 25285 / DSM 2151 / CCUG 4856 / JCM 11019 / LMG 10263 / NCTC 9343 / Onslow / VPI 2553 / EN-2)).